The primary structure comprises 329 residues: Beta-ketoacyl-[acyl-carrier-protein] synthase III (329 aa).

Active-site residues include Cys-123 and His-256. Residues 257-261 are ACP-binding; that stretch reads QANIR. The active site involves Asn-286.

The protein belongs to the thiolase-like superfamily. FabH family. In terms of assembly, homodimer.

The protein resides in the cytoplasm. It catalyses the reaction malonyl-[ACP] + acetyl-CoA + H(+) = 3-oxobutanoyl-[ACP] + CO2 + CoA. Its pathway is lipid metabolism; fatty acid biosynthesis. Functionally, catalyzes the condensation reaction of fatty acid synthesis by the addition to an acyl acceptor of two carbons from malonyl-ACP. Catalyzes the first condensation reaction which initiates fatty acid synthesis and may therefore play a role in governing the total rate of fatty acid production. Possesses both acetoacetyl-ACP synthase and acetyl transacylase activities. Its substrate specificity determines the biosynthesis of branched-chain and/or straight-chain of fatty acids. The chain is Beta-ketoacyl-[acyl-carrier-protein] synthase III from Paraburkholderia phymatum (strain DSM 17167 / CIP 108236 / LMG 21445 / STM815) (Burkholderia phymatum).